Reading from the N-terminus, the 246-residue chain is Sulfate transporter CysZ (246 aa).

The next 4 membrane-spanning stretches (helical) occupy residues 24 to 44 (LFVL…IGFA), 69 to 89 (IVWP…FTMV), 148 to 168 (LLVL…WILF), and 214 to 234 (LLIP…ATLF).

It belongs to the CysZ family.

It is found in the cell inner membrane. High affinity, high specificity proton-dependent sulfate transporter, which mediates sulfate uptake. Provides the sulfur source for the cysteine synthesis pathway. In Pseudomonas aeruginosa (strain LESB58), this protein is Sulfate transporter CysZ.